The following is a 657-amino-acid chain: N-acetylgalactosaminyltransferase 7 (657 aa).

Over 1-6 (MRLKIG) the chain is Cytoplasmic. Residues 7–29 (FILRSLLVVGSFLGLVVLWSSLT) traverse the membrane as a helical; Signal-anchor for type II membrane protein segment. Topologically, residues 30–657 (PRPDDPSPLS…KWEMNNIHSV (628 aa)) are lumenal. Residues 31–66 (RPDDPSPLSRMREDRDVNDPMPNRGGNGLAPGEDRF) form a disordered region. 5 disulfide bridges follow: C197–C435, C426–C507, C545–C562, C585–C600, and C625–C640. Residues 206–317 (LLTSSVVIVF…VNWYAPLVAP (112 aa)) form a catalytic subdomain A region. The substrate site is built by D247 and R277. Mn(2+)-binding residues include D301 and H303. Residues 381–443 (PYRSPAMAGG…PCSRVGHIYR (63 aa)) form a catalytic subdomain B region. W412 contributes to the substrate binding site. H440 contacts Mn(2+). R443 is a binding site for substrate. Residues 532 to 652 (VDWGEIRGFE…SKTTQKWEMN (121 aa)) enclose the Ricin B-type lectin domain.

The protein belongs to the glycosyltransferase 2 family. GalNAc-T subfamily. Mn(2+) serves as cofactor.

It localises to the golgi apparatus membrane. The enzyme catalyses L-seryl-[protein] + UDP-N-acetyl-alpha-D-galactosamine = a 3-O-[N-acetyl-alpha-D-galactosaminyl]-L-seryl-[protein] + UDP + H(+). The catalysed reaction is L-threonyl-[protein] + UDP-N-acetyl-alpha-D-galactosamine = a 3-O-[N-acetyl-alpha-D-galactosaminyl]-L-threonyl-[protein] + UDP + H(+). Its pathway is protein modification; protein glycosylation. Functionally, glycopeptide transferase involved in O-linked oligosaccharide biosynthesis, which catalyzes the transfer of an N-acetyl-D-galactosamine residue to an already glycosylated peptide. In contrast to other proteins of the family, it does not act as a peptide transferase that transfers GalNAc onto serine or threonine residue on the protein receptor, but instead requires the prior addition of a GalNAc on a peptide before adding additional GalNAc moieties. Some peptide transferase activity is however not excluded, considering that its appropriate peptide substrate may remain unidentified. This is N-acetylgalactosaminyltransferase 7 (GALNT7) from Pongo abelii (Sumatran orangutan).